A 236-amino-acid polypeptide reads, in one-letter code: T-cell surface glycoprotein CD8 alpha chain (236 aa).

The first 26 residues, 1–26 (MASRVICFLSLNLLLLDVITRLQVSG), serve as a signal peptide directing secretion. Positions 27 to 130 (QLQLSPKKVD…ITSNSVMYFS (104 aa)) constitute an Ig-like V-type domain. The Extracellular segment spans residues 27 to 189 (QLQLSPKKVD…MGLGFACDIY (163 aa)). The cysteines at positions 47 and 119 are disulfide-linked. An N-linked (GlcNAc...) asparagine glycan is attached at Asn63. Thr144 carries O-linked (GalNAc...) threonine; partial glycosylation. O-linked (GalNAc...) threonine glycosylation is found at Thr148, Thr152, Thr158, and Thr160. Residues 150–170 (APTPVPPPTGTPRPLRPEACR) form a disordered region. The chain crosses the membrane as a helical span at residues 190–210 (IWAPLAGICAVLLLSLVITLI). Cys211 carries the S-palmitoyl cysteine lipid modification. Topologically, residues 211–236 (CCHRNRRRVCKCPRPLVKPRPSEKFV) are cytoplasmic.

In terms of assembly, forms disulfide-linked heterodimers with CD8B at the cell surface. Also forms homodimers in several cell types including NK-cells or peripheral blood T-lymphocytes. Interacts with the MHC class I HLA-A/B2M dimer. Interacts with LCK in a zinc-dependent manner. In terms of processing, palmitoylated, but association with CD8B seems to be more important for the enrichment of CD8A in lipid rafts. Post-translationally, O-glycosylated. Phosphorylated in cytotoxic T-lymphocytes (CTLs) following activation.

It is found in the cell membrane. In terms of biological role, integral membrane glycoprotein that plays an essential role in the immune response and serves multiple functions in responses against both external and internal offenses. In T-cells, functions primarily as a coreceptor for MHC class I molecule:peptide complex. The antigens presented by class I peptides are derived from cytosolic proteins while class II derived from extracellular proteins. Interacts simultaneously with the T-cell receptor (TCR) and the MHC class I proteins presented by antigen presenting cells (APCs). In turn, recruits the Src kinase LCK to the vicinity of the TCR-CD3 complex. LCK then initiates different intracellular signaling pathways by phosphorylating various substrates ultimately leading to lymphokine production, motility, adhesion and activation of cytotoxic T-lymphocytes (CTLs). This mechanism enables CTLs to recognize and eliminate infected cells and tumor cells. In NK-cells, the presence of CD8A homodimers at the cell surface provides a survival mechanism allowing conjugation and lysis of multiple target cells. CD8A homodimer molecules also promote the survival and differentiation of activated lymphocytes into memory CD8 T-cells. The sequence is that of T-cell surface glycoprotein CD8 alpha chain (Cd8a) from Rattus norvegicus (Rat).